Consider the following 218-residue polypeptide: MSDNDELQQIAHLRREYTKGGLRRRDLPADPLTLFERWLSQACEAKLADPTAMVVATVDEHGQPYQRIVLLKHYDEKGMVFYTNLGSRKAHQIENNPRVSLLFPWHTLERQVMVIGKAERLSTLEVMKYFHSRPRDSQIGAWVSKQSSRISARGILESKFLELKQKFQQGEVPLPSFWGGFRVSLEQIEFWQGGEHRLHDRFLYQRENDAWKIDRLAP.

Substrate is bound by residues 14–17 (RREY) and Lys-72. Residues 67–72 (RIVLLK), 82–83 (YT), Arg-88, Lys-89, and Gln-111 contribute to the FMN site. Substrate is bound by residues Tyr-129, Arg-133, and Ser-137. FMN contacts are provided by residues 146 to 147 (QS) and Trp-191. 197 to 199 (RLH) is a binding site for substrate. Arg-201 lines the FMN pocket.

This sequence belongs to the pyridoxamine 5'-phosphate oxidase family. As to quaternary structure, homodimer. FMN is required as a cofactor.

The enzyme catalyses pyridoxamine 5'-phosphate + O2 + H2O = pyridoxal 5'-phosphate + H2O2 + NH4(+). It carries out the reaction pyridoxine 5'-phosphate + O2 = pyridoxal 5'-phosphate + H2O2. It functions in the pathway cofactor metabolism; pyridoxal 5'-phosphate salvage; pyridoxal 5'-phosphate from pyridoxamine 5'-phosphate: step 1/1. The protein operates within cofactor metabolism; pyridoxal 5'-phosphate salvage; pyridoxal 5'-phosphate from pyridoxine 5'-phosphate: step 1/1. Functionally, catalyzes the oxidation of either pyridoxine 5'-phosphate (PNP) or pyridoxamine 5'-phosphate (PMP) into pyridoxal 5'-phosphate (PLP). The protein is Pyridoxine/pyridoxamine 5'-phosphate oxidase of Escherichia coli O127:H6 (strain E2348/69 / EPEC).